The primary structure comprises 469 residues: Argininosuccinate lyase (469 aa).

This sequence belongs to the lyase 1 family. Argininosuccinate lyase subfamily.

Its subcellular location is the cytoplasm. It carries out the reaction 2-(N(omega)-L-arginino)succinate = fumarate + L-arginine. It participates in amino-acid biosynthesis; L-arginine biosynthesis; L-arginine from L-ornithine and carbamoyl phosphate: step 3/3. This is Argininosuccinate lyase from Burkholderia lata (strain ATCC 17760 / DSM 23089 / LMG 22485 / NCIMB 9086 / R18194 / 383).